We begin with the raw amino-acid sequence, 79 residues long: UPF0154 protein lwe1321 (79 aa).

A helical transmembrane segment spans residues 2-22 (WIYILVGIICLLAGLAGGFFI). Positions 57 to 66 (KINQMMSAMN) are enriched in polar residues. Residues 57 to 79 (KINQMMSAMNKQQEKEKPKKAKK) form a disordered region.

The protein belongs to the UPF0154 family.

It is found in the cell membrane. The sequence is that of UPF0154 protein lwe1321 from Listeria welshimeri serovar 6b (strain ATCC 35897 / DSM 20650 / CCUG 15529 / CIP 8149 / NCTC 11857 / SLCC 5334 / V8).